The sequence spans 327 residues: ATP-dependent 6-phosphofructokinase (327 aa).

Gly12 is a binding site for ATP. ADP contacts are provided by residues 22 to 26 (RGVVR) and 55 to 60 (RYSVSD). Residues 73–74 (RF) and 103–106 (GDGS) contribute to the ATP site. Residue Asp104 participates in Mg(2+) binding. 127–129 (TID) provides a ligand contact to substrate. Asp129 serves as the catalytic Proton acceptor. Arg156 contacts ADP. Substrate contacts are provided by residues Arg164 and 171–173 (MGR). ADP contacts are provided by residues 187-189 (GCE), Lys213, and 215-217 (KKH). Substrate-binding positions include Glu224, Arg245, and 251-254 (HIQR).

Belongs to the phosphofructokinase type A (PFKA) family. ATP-dependent PFK group I subfamily. Prokaryotic clade 'B1' sub-subfamily. Homotetramer. Requires Mg(2+) as cofactor.

Its subcellular location is the cytoplasm. It carries out the reaction beta-D-fructose 6-phosphate + ATP = beta-D-fructose 1,6-bisphosphate + ADP + H(+). The protein operates within carbohydrate degradation; glycolysis; D-glyceraldehyde 3-phosphate and glycerone phosphate from D-glucose: step 3/4. Allosterically activated by ADP and other diphosphonucleosides, and allosterically inhibited by phosphoenolpyruvate. Catalyzes the phosphorylation of D-fructose 6-phosphate to fructose 1,6-bisphosphate by ATP, the first committing step of glycolysis. This chain is ATP-dependent 6-phosphofructokinase, found in Yersinia pseudotuberculosis serotype IB (strain PB1/+).